Consider the following 334-residue polypeptide: SH3 and cysteine-rich domain-containing protein 3 (334 aa).

Positions 1-26 (MAQYDQLEDKDSLDIHDNPPAPENVV) are disordered. Residues 7 to 17 (LEDKDSLDIHD) are compositionally biased toward basic and acidic residues. The segment at 62–113 (PHKFKDHYCKKPKFCDVCARMIVLNNKFALRCKNCKTNIHHSCQSYVQFQRC) adopts a Phorbol-ester/DAG-type zinc-finger fold. The segment covering 178-190 (EEEAQQPKEDEEG) has biased composition (acidic residues). Residues 178 to 215 (EEEAQQPKEDEEGAEGKQDGDKKDKTATDDKNKKQQQT) form a disordered region. The segment covering 191–210 (AEGKQDGDKKDKTATDDKNK) has biased composition (basic and acidic residues). SH3 domains follow at residues 217-276 (SQSH…RVRA) and 277-334 (GERV…LHEL).

As to quaternary structure, component of a calcium channel complex with CACNA1S. As to expression, expressed in muscles at the muscle triad.

It localises to the cytoplasm. The protein localises to the cell membrane. It is found in the sarcolemma. The protein resides in the T-tubule. In terms of biological role, required for normal excitation-contraction coupling in skeletal muscle and for normal muscle contraction in response to membrane depolarization. Required for normal Ca(2+) release from the sarcplasmic reticulum, which ultimately leads to muscle contraction. Probably functions via its effects on muscle calcium channels. Increases CACNA1S channel activity, in addition to its role in enhancing the expression of CACNA1S at the cell membrane. Has a redundant role in promoting the expression of the calcium channel CACNA1S at the cell membrane. This Danio rerio (Zebrafish) protein is SH3 and cysteine-rich domain-containing protein 3.